Here is a 412-residue protein sequence, read N- to C-terminus: Histone-lysine N-methyltransferase SUV39H1 (412 aa).

An interaction with SIRT1 region spans residues 1–89 (MAENLKGCSV…LKCIRVLKQF (89 aa)). The region spanning 43-101 (FEVEYLCDYKKIREQEYYLVKWRGYPDSENTWEPRQNLKCIRVLKQFHKDLERELVRRH) is the Chromo domain. One can recognise a Pre-SET domain in the interval 179–240 (VGCECQDCLL…DCPNRVVQKG (62 aa)). Positions 181, 183, 186, 194, 195, 222, 226, 228, and 232 each coordinate Zn(2+). Residues 243–366 (YDLCIFRTND…AGEELTFDYN (124 aa)) form the SET domain. 254-256 (RGW) contributes to the S-adenosyl-L-methionine binding site. Residues 255–377 (GWGVRTLEKI…QVDPVDMEST (123 aa)) form a mediates interaction with MECOM region. At Lys266 the chain carries N6-acetyllysine. S-adenosyl-L-methionine-binding positions include Tyr297 and 323 to 324 (NH). Residue Cys326 coordinates Zn(2+). Ser391 carries the post-translational modification Phosphoserine. One can recognise a Post-SET domain in the interval 396 to 412 (VRIECKCGTTACRKYLF). The Zn(2+) site is built by Cys400, Cys402, and Cys407.

Belongs to the class V-like SAM-binding methyltransferase superfamily. Histone-lysine methyltransferase family. Suvar3-9 subfamily. In terms of assembly, interacts with CCAR2 and GFI1B. Component of the eNoSC complex, composed of SIRT1, SUV39H1 and RRP8. Interacts with H3 and H4 histones. Interacts with DNMT3B, CBX1, CBX4, MBD1, RUNX1, RUNX3, MYOD1, SMAD5 and RB1. Interacts with SBF1 through the SET domain. Interacts with HDAC1 and HDAC2 through the N-terminus and associates with the core histone deacetylase complex composed of HDAC1, HDAC2, RBBP4 and RBBP7. Interacts (via SET domain) with MECOM; enhances MECOM transcriptional repression activity. Interacts with LMNA; the interaction increases stability of SUV39H1. The large PER complex involved in the histone methylation is composed of at least PER2, CBX3, TRIM28, SUV39H1 and/or SUV39H2; CBX3 mediates the formation of the complex. Post-translationally, phosphorylated on serine residues, and to a lesser degree, on threonine residues. In terms of processing, acetylated at Lys-266, leading to inhibition of enzyme activity. SIRT1-mediated deacetylation relieves this inhibition. Ubiquitinated by the DCX(DCAF13) E3 ubiquitin ligase complex, leading to its degradation. Widely expressed.

The protein localises to the nucleus. The protein resides in the nucleus lamina. It localises to the nucleoplasm. It is found in the chromosome. Its subcellular location is the centromere. It carries out the reaction L-lysyl(9)-[histone H3] + 3 S-adenosyl-L-methionine = N(6),N(6),N(6)-trimethyl-L-lysyl(9)-[histone H3] + 3 S-adenosyl-L-homocysteine + 3 H(+). Its activity is regulated as follows. Negatively regulated by CCAR2. In terms of biological role, histone methyltransferase that specifically trimethylates 'Lys-9' of histone H3 using monomethylated H3 'Lys-9' as substrate. H3 'Lys-9' trimethylation represents a specific tag for epigenetic transcriptional repression by recruiting HP1 (CBX1, CBX3 and/or CBX5) proteins to methylated histones. Mainly functions in heterochromatin regions, thereby playing a central role in the establishment of constitutive heterochromatin at pericentric and telomere regions. H3 'Lys-9' trimethylation is also required to direct DNA methylation at pericentric repeats. SUV39H1 is targeted to histone H3 via its interaction with RB1 and is involved in many processes, such as repression of MYOD1-stimulated differentiation, regulation of the control switch for exiting the cell cycle and entering differentiation, repression by the PML-RARA fusion protein, BMP-induced repression, repression of switch recombination to IgA and regulation of telomere length. Component of the eNoSC (energy-dependent nucleolar silencing) complex, a complex that mediates silencing of rDNA in response to intracellular energy status and acts by recruiting histone-modifying enzymes. The eNoSC complex is able to sense the energy status of cell: upon glucose starvation, elevation of NAD(+)/NADP(+) ratio activates SIRT1, leading to histone H3 deacetylation followed by dimethylation of H3 at 'Lys-9' (H3K9me2) by SUV39H1 and the formation of silent chromatin in the rDNA locus. Recruited by the PER complex to the E-box elements of the circadian target genes such as PER2 itself or PER1, contributes to the conversion of local chromatin to a heterochromatin-like repressive state through H3 'Lys-9' trimethylation. The polypeptide is Histone-lysine N-methyltransferase SUV39H1 (Suv39h1) (Mus musculus (Mouse)).